Reading from the N-terminus, the 307-residue chain is tRNA dimethylallyltransferase (307 aa).

Residue 9-16 (GPTAVGKT) participates in ATP binding. Residue 11–16 (TAVGKT) coordinates substrate. Residues 34 to 37 (DSMQ) are interaction with substrate tRNA.

The protein belongs to the IPP transferase family. In terms of assembly, monomer. The cofactor is Mg(2+).

It catalyses the reaction adenosine(37) in tRNA + dimethylallyl diphosphate = N(6)-dimethylallyladenosine(37) in tRNA + diphosphate. Its function is as follows. Catalyzes the transfer of a dimethylallyl group onto the adenine at position 37 in tRNAs that read codons beginning with uridine, leading to the formation of N6-(dimethylallyl)adenosine (i(6)A). The protein is tRNA dimethylallyltransferase of Limosilactobacillus reuteri (strain DSM 20016) (Lactobacillus reuteri).